The primary structure comprises 158 residues: UPF0260 protein RHE_CH01262 (158 aa).

Belongs to the UPF0260 family.

This chain is UPF0260 protein RHE_CH01262, found in Rhizobium etli (strain ATCC 51251 / DSM 11541 / JCM 21823 / NBRC 15573 / CFN 42).